The primary structure comprises 121 residues: Small ribosomal subunit protein uS13 (121 aa).

The tract at residues 94–121 (GLPLRGQRTRTNARTRKGPRRAAQALKK) is disordered.

Belongs to the universal ribosomal protein uS13 family. As to quaternary structure, part of the 30S ribosomal subunit. Forms a loose heterodimer with protein S19. Forms two bridges to the 50S subunit in the 70S ribosome.

Located at the top of the head of the 30S subunit, it contacts several helices of the 16S rRNA. In the 70S ribosome it contacts the 23S rRNA (bridge B1a) and protein L5 of the 50S subunit (bridge B1b), connecting the 2 subunits; these bridges are implicated in subunit movement. Contacts the tRNAs in the A and P-sites. In Burkholderia mallei (strain NCTC 10247), this protein is Small ribosomal subunit protein uS13.